We begin with the raw amino-acid sequence, 378 residues long: Cysteine synthase (378 aa).

Positions 10–31 are disordered; sequence NSEGDSNQQQNNNNNSNNNLKE. Over residues 15-28 the composition is skewed to low complexity; the sequence is SNQQQNNNNNSNNN. Lysine 79 carries the N6-(pyridoxal phosphate)lysine modification. Residues 215–219 and serine 319 contribute to the pyridoxal 5'-phosphate site; that span reads GTGGT.

It belongs to the cysteine synthase/cystathionine beta-synthase family. The cofactor is pyridoxal 5'-phosphate.

The catalysed reaction is O-acetyl-L-serine + hydrogen sulfide = L-cysteine + acetate. It functions in the pathway amino-acid biosynthesis; L-cysteine biosynthesis; L-cysteine from L-serine: step 2/2. The sequence is that of Cysteine synthase (cysK) from Dictyostelium discoideum (Social amoeba).